We begin with the raw amino-acid sequence, 581 residues long: Phosphoinositide phospholipase C 2 (581 aa).

Positions 26 to 102 (EIKTIFEKYS…NPPLALHKVH (77 aa)) constitute an EF-hand-like domain. The PI-PLC X-box domain occupies 103 to 248 (HDMDAPISHY…LKRRIIISTK (146 aa)). Residues H118 and H164 contribute to the active site. The disordered stretch occupies residues 279 to 314 (PSFIQRNKSEAKDDLDGNDDDDDDDDEDKSKINAPP). The segment covering 294 to 305 (DGNDDDDDDDDE) has biased composition (acidic residues). Residues 317–433 (KHLIAIHAGK…GYIKKPDLLL (117 aa)) form the PI-PLC Y-box domain. The 130-residue stretch at 434–563 (KSGSDSDIFD…EGIRAFPLHS (130 aa)) folds into the C2 domain.

The cofactor is Ca(2+). In terms of processing, phosphorylation level varies significantly during early response to bacterial elicitor. Expressed in roots, shoots, leaves and flowers.

Its subcellular location is the cell membrane. The enzyme catalyses a 1,2-diacyl-sn-glycero-3-phospho-(1D-myo-inositol-4,5-bisphosphate) + H2O = 1D-myo-inositol 1,4,5-trisphosphate + a 1,2-diacyl-sn-glycerol + H(+). Functionally, the production of the second messenger molecules diacylglycerol (DAG) and inositol 1,4,5-trisphosphate (IP3) is mediated by activated phosphatidylinositol-specific phospholipase C enzymes. At physiological calcium concentration, the preferred substrate is phosphatidylinositol 4,5-bisphosphate versus phosphatidylinositol. The chain is Phosphoinositide phospholipase C 2 (PLC2) from Arabidopsis thaliana (Mouse-ear cress).